The following is a 231-amino-acid chain: Ion-translocating oxidoreductase complex subunit E (231 aa).

The next 6 helical transmembrane spans lie at 18-38, 39-59, 69-89, 93-113, 128-148, and 182-202; these read GLVQLLGLCPLLAVTATVTNA, LGLGFATLLVLVGSNMLVSLV, IPVFVMIIAALVTSVQLLINA, GLYLSLGIFLPLIVTNCVIIG, AFDGLMMGIGFTCVLVVLGAG, and PFLLALLPPGAFIGMGLLIAG.

This sequence belongs to the NqrDE/RnfAE family. In terms of assembly, the complex is composed of six subunits: RnfA, RnfB, RnfC, RnfD, RnfE and RnfG.

Its subcellular location is the cell inner membrane. Part of a membrane-bound complex that couples electron transfer with translocation of ions across the membrane. This chain is Ion-translocating oxidoreductase complex subunit E, found in Shewanella denitrificans (strain OS217 / ATCC BAA-1090 / DSM 15013).